Here is a 171-residue protein sequence, read N- to C-terminus: 2-vinyl bacteriochlorophyllide hydratase (171 aa).

It functions in the pathway porphyrin-containing compound metabolism; bacteriochlorophyll biosynthesis (light-independent). This is 2-vinyl bacteriochlorophyllide hydratase (bchF) from Rhodobacter capsulatus (strain ATCC BAA-309 / NBRC 16581 / SB1003).